The following is a 230-amino-acid chain: 3,4-dihydroxy-2-butanone 4-phosphate synthase (230 aa).

D-ribulose 5-phosphate-binding positions include 38–39, D43, 151–155, and E175; these read RE and RRGHT. E39 is a Mg(2+) binding site. Residue H154 coordinates Mg(2+).

The protein belongs to the DHBP synthase family. Homodimer. The cofactor is Mg(2+). Mn(2+) is required as a cofactor.

The enzyme catalyses D-ribulose 5-phosphate = (2S)-2-hydroxy-3-oxobutyl phosphate + formate + H(+). It functions in the pathway cofactor biosynthesis; riboflavin biosynthesis; 2-hydroxy-3-oxobutyl phosphate from D-ribulose 5-phosphate: step 1/1. Functionally, catalyzes the conversion of D-ribulose 5-phosphate to formate and 3,4-dihydroxy-2-butanone 4-phosphate. The polypeptide is 3,4-dihydroxy-2-butanone 4-phosphate synthase (Vibrio harveyi (Beneckea harveyi)).